Reading from the N-terminus, the 101-residue chain is Small ribosomal subunit protein uS14 (101 aa).

The protein belongs to the universal ribosomal protein uS14 family. Part of the 30S ribosomal subunit. Contacts proteins S3 and S10.

Functionally, binds 16S rRNA, required for the assembly of 30S particles and may also be responsible for determining the conformation of the 16S rRNA at the A site. In Pseudomonas syringae pv. syringae (strain B728a), this protein is Small ribosomal subunit protein uS14.